The following is a 143-amino-acid chain: Large ribosomal subunit protein uL16 (143 aa).

The protein belongs to the universal ribosomal protein uL16 family. As to quaternary structure, part of the 50S ribosomal subunit.

Its function is as follows. Binds 23S rRNA and is also seen to make contacts with the A and possibly P site tRNAs. The polypeptide is Large ribosomal subunit protein uL16 (Tropheryma whipplei (strain TW08/27) (Whipple's bacillus)).